Consider the following 172-residue polypeptide: HTH-type transcriptional regulator IscR (172 aa).

An HTH rrf2-type domain is found at 2 to 131; it reads RLTSKGRYAV…NNITLGELMR (130 aa). Residues 28 to 51 constitute a DNA-binding region (H-T-H motif); that stretch reads LADISERQGISLSYLEQLFSRLRK. Cys92, Cys98, and Cys104 together coordinate [2Fe-2S] cluster.

It depends on [2Fe-2S] cluster as a cofactor.

Its function is as follows. Regulates the transcription of several operons and genes involved in the biogenesis of Fe-S clusters and Fe-S-containing proteins. This chain is HTH-type transcriptional regulator IscR, found in Photobacterium profundum (strain SS9).